A 75-amino-acid chain; its full sequence is Exodeoxyribonuclease 7 small subunit (75 aa).

Belongs to the XseB family. As to quaternary structure, heterooligomer composed of large and small subunits.

The protein resides in the cytoplasm. The catalysed reaction is Exonucleolytic cleavage in either 5'- to 3'- or 3'- to 5'-direction to yield nucleoside 5'-phosphates.. Bidirectionally degrades single-stranded DNA into large acid-insoluble oligonucleotides, which are then degraded further into small acid-soluble oligonucleotides. The chain is Exodeoxyribonuclease 7 small subunit from Chlamydia abortus (strain DSM 27085 / S26/3) (Chlamydophila abortus).